Here is a 335-residue protein sequence, read N- to C-terminus: 4-hydroxy-3-methylbut-2-enyl diphosphate reductase 2 (335 aa).

Cysteine 37 is a [4Fe-4S] cluster binding site. Histidine 66 and histidine 99 together coordinate (2E)-4-hydroxy-3-methylbut-2-enyl diphosphate. Histidine 66 and histidine 99 together coordinate dimethylallyl diphosphate. Isopentenyl diphosphate-binding residues include histidine 66 and histidine 99. Cysteine 121 contacts [4Fe-4S] cluster. Residue histidine 149 coordinates (2E)-4-hydroxy-3-methylbut-2-enyl diphosphate. Histidine 149 is a binding site for dimethylallyl diphosphate. Histidine 149 serves as a coordination point for isopentenyl diphosphate. Glutamate 151 (proton donor) is an active-site residue. Residue threonine 189 participates in (2E)-4-hydroxy-3-methylbut-2-enyl diphosphate binding. Cysteine 219 contacts [4Fe-4S] cluster. Serine 247, serine 248, asparagine 249, and serine 292 together coordinate (2E)-4-hydroxy-3-methylbut-2-enyl diphosphate. Dimethylallyl diphosphate contacts are provided by serine 247, serine 248, asparagine 249, and serine 292. 4 residues coordinate isopentenyl diphosphate: serine 247, serine 248, asparagine 249, and serine 292.

The protein belongs to the IspH family. [4Fe-4S] cluster serves as cofactor.

It catalyses the reaction isopentenyl diphosphate + 2 oxidized [2Fe-2S]-[ferredoxin] + H2O = (2E)-4-hydroxy-3-methylbut-2-enyl diphosphate + 2 reduced [2Fe-2S]-[ferredoxin] + 2 H(+). The catalysed reaction is dimethylallyl diphosphate + 2 oxidized [2Fe-2S]-[ferredoxin] + H2O = (2E)-4-hydroxy-3-methylbut-2-enyl diphosphate + 2 reduced [2Fe-2S]-[ferredoxin] + 2 H(+). Its pathway is isoprenoid biosynthesis; dimethylallyl diphosphate biosynthesis; dimethylallyl diphosphate from (2E)-4-hydroxy-3-methylbutenyl diphosphate: step 1/1. It participates in isoprenoid biosynthesis; isopentenyl diphosphate biosynthesis via DXP pathway; isopentenyl diphosphate from 1-deoxy-D-xylulose 5-phosphate: step 6/6. Its function is as follows. Catalyzes the conversion of 1-hydroxy-2-methyl-2-(E)-butenyl 4-diphosphate (HMBPP) into a mixture of isopentenyl diphosphate (IPP) and dimethylallyl diphosphate (DMAPP). Acts in the terminal step of the DOXP/MEP pathway for isoprenoid precursor biosynthesis. Has a higher activity compared with LytB2. Is essential for M.tuberculosis growth in vitro. The protein is 4-hydroxy-3-methylbut-2-enyl diphosphate reductase 2 of Mycobacterium tuberculosis (strain ATCC 25618 / H37Rv).